The primary structure comprises 39 residues: Cytochrome b6-f complex subunit 5 (39 aa).

The helical transmembrane segment at 5–25 (LLCGIVLGLVPITLLGLFVSA) threads the bilayer.

It belongs to the PetG family. As to quaternary structure, the 4 large subunits of the cytochrome b6-f complex are cytochrome b6, subunit IV (17 kDa polypeptide, PetD), cytochrome f and the Rieske protein, while the 4 small subunits are PetG, PetL, PetM and PetN. The complex functions as a dimer.

It is found in the cellular thylakoid membrane. Functionally, component of the cytochrome b6-f complex, which mediates electron transfer between photosystem II (PSII) and photosystem I (PSI), cyclic electron flow around PSI, and state transitions. PetG is required for either the stability or assembly of the cytochrome b6-f complex. This Prochlorococcus marinus (strain MIT 9515) protein is Cytochrome b6-f complex subunit 5.